The following is a 448-amino-acid chain: N-succinylarginine dihydrolase (448 aa).

Residues 19–28, Asn-110, and 137–138 each bind substrate; these read GGLSYGNVAS and HR. The active site involves Glu-174. Arg-214 provides a ligand contact to substrate. His-250 is a catalytic residue. Residues Asp-252 and Asn-365 each coordinate substrate. Catalysis depends on Cys-371, which acts as the Nucleophile.

The protein belongs to the succinylarginine dihydrolase family. Homodimer.

The catalysed reaction is N(2)-succinyl-L-arginine + 2 H2O + 2 H(+) = N(2)-succinyl-L-ornithine + 2 NH4(+) + CO2. The protein operates within amino-acid degradation; L-arginine degradation via AST pathway; L-glutamate and succinate from L-arginine: step 2/5. Catalyzes the hydrolysis of N(2)-succinylarginine into N(2)-succinylornithine, ammonia and CO(2). This chain is N-succinylarginine dihydrolase, found in Pseudomonas syringae pv. tomato (strain ATCC BAA-871 / DC3000).